A 251-amino-acid chain; its full sequence is Zinc import ATP-binding protein ZnuC (251 aa).

Residues 5 to 220 (VSLENVSVSF…PEFISMFGPR (216 aa)) form the ABC transporter domain. 37-44 (GPNGAGKS) contributes to the ATP binding site.

It belongs to the ABC transporter superfamily. Zinc importer (TC 3.A.1.15.5) family. In terms of assembly, the complex is composed of two ATP-binding proteins (ZnuC), two transmembrane proteins (ZnuB) and a solute-binding protein (ZnuA).

It is found in the cell inner membrane. The enzyme catalyses Zn(2+)(out) + ATP(in) + H2O(in) = Zn(2+)(in) + ADP(in) + phosphate(in) + H(+)(in). In terms of biological role, part of the ABC transporter complex ZnuABC involved in zinc import. Responsible for energy coupling to the transport system. The chain is Zinc import ATP-binding protein ZnuC from Shigella flexneri serotype 5b (strain 8401).